A 198-amino-acid chain; its full sequence is Probable GTP-binding protein EngB (198 aa).

In terms of domain architecture, EngB-type G spans 22–195 (NIPEVALAGR…LEVIGRWVGL (174 aa)). GTP contacts are provided by residues 30 to 37 (GRSNVGKS), 57 to 61 (GRTRL), 75 to 78 (DLPG), 142 to 145 (TKAD), and 174 to 176 (FSA). Mg(2+) contacts are provided by Ser-37 and Thr-59.

The protein belongs to the TRAFAC class TrmE-Era-EngA-EngB-Septin-like GTPase superfamily. EngB GTPase family. Mg(2+) is required as a cofactor.

Necessary for normal cell division and for the maintenance of normal septation. This chain is Probable GTP-binding protein EngB, found in Pelotomaculum thermopropionicum (strain DSM 13744 / JCM 10971 / SI).